Reading from the N-terminus, the 277-residue chain is Large ribosomal subunit protein uL2 (277 aa).

Disordered regions lie at residues 32-58 and 225-277; these read KSLT…RGGG and VAMN…RRNN.

It belongs to the universal ribosomal protein uL2 family. Part of the 50S ribosomal subunit. Forms a bridge to the 30S subunit in the 70S ribosome.

In terms of biological role, one of the primary rRNA binding proteins. Required for association of the 30S and 50S subunits to form the 70S ribosome, for tRNA binding and peptide bond formation. It has been suggested to have peptidyltransferase activity; this is somewhat controversial. Makes several contacts with the 16S rRNA in the 70S ribosome. The sequence is that of Large ribosomal subunit protein uL2 from Borrelia duttonii (strain Ly).